The following is a 102-amino-acid chain: Small ribosomal subunit protein uS10 (102 aa).

Belongs to the universal ribosomal protein uS10 family. In terms of assembly, part of the 30S ribosomal subunit.

In terms of biological role, involved in the binding of tRNA to the ribosomes. The sequence is that of Small ribosomal subunit protein uS10 from Cereibacter sphaeroides (strain ATCC 17029 / ATH 2.4.9) (Rhodobacter sphaeroides).